Consider the following 647-residue polypeptide: Threonine--tRNA ligase (647 aa).

The TGS domain occupies Met1–Thr61. A catalytic region spans residues Asp242 to Pro540. Zn(2+)-binding residues include Cys336, His387, and His517.

Belongs to the class-II aminoacyl-tRNA synthetase family. Homodimer. It depends on Zn(2+) as a cofactor.

Its subcellular location is the cytoplasm. The enzyme catalyses tRNA(Thr) + L-threonine + ATP = L-threonyl-tRNA(Thr) + AMP + diphosphate + H(+). In terms of biological role, catalyzes the attachment of threonine to tRNA(Thr) in a two-step reaction: L-threonine is first activated by ATP to form Thr-AMP and then transferred to the acceptor end of tRNA(Thr). Also edits incorrectly charged L-seryl-tRNA(Thr). The sequence is that of Threonine--tRNA ligase from Streptococcus pneumoniae serotype 2 (strain D39 / NCTC 7466).